Here is a 335-residue protein sequence, read N- to C-terminus: MLDLAYLQTAPEQTALLKQQATDFIVREELGYPLSGDGEFAAVKIRKTNANTIWAGEQLAKFCGISVRNMSYAGLKDRNAITDQWFSLHMPGKPTPDFSRFRIEGIEILEVTRHNRKIRTGSLQGNHFDILLRNADATEELNRRLNLVKRLGFPNYFTEQRFGRDGHNLTEAMRWAKGEIQVKDRKKRSFYLSAARGEVFNLVVSDRLQMGLATQVMPNDILQLAGSHSWFQANEKEDLNALQVRLEHHDILLTAPLIGDPPQSANALENQVVAQHQALLTLMKREHLKPARRPLLMRAQNLNWQFEPTGLRLQFFLPAGSYATALIRELVRVVD.

Asp-77 functions as the Nucleophile in the catalytic mechanism. The TRUD domain occupies 152-308 (GFPNYFTEQR…AQNLNWQFEP (157 aa)).

Belongs to the pseudouridine synthase TruD family.

It carries out the reaction uridine(13) in tRNA = pseudouridine(13) in tRNA. Responsible for synthesis of pseudouridine from uracil-13 in transfer RNAs. This is tRNA pseudouridine synthase D from Actinobacillus succinogenes (strain ATCC 55618 / DSM 22257 / CCUG 43843 / 130Z).